A 514-amino-acid chain; its full sequence is Steroid 17-alpha-hydroxylase/17,20 lyase (514 aa).

Cys445 contacts heme.

The protein belongs to the cytochrome P450 family. Heme is required as a cofactor.

It is found in the membrane. It carries out the reaction a C21-steroid + reduced [NADPH--hemoprotein reductase] + O2 = a 17alpha-hydroxy-C21-steroid + oxidized [NADPH--hemoprotein reductase] + H2O + H(+). The catalysed reaction is 17alpha-hydroxyprogesterone + reduced [NADPH--hemoprotein reductase] + O2 = androst-4-ene-3,17-dione + acetate + oxidized [NADPH--hemoprotein reductase] + H2O + 2 H(+). It catalyses the reaction 17alpha-hydroxypregnenolone + reduced [NADPH--hemoprotein reductase] + O2 = 3beta-hydroxyandrost-5-en-17-one + acetate + oxidized [NADPH--hemoprotein reductase] + H2O + 2 H(+). Its pathway is lipid metabolism; steroid biosynthesis. Functionally, conversion of pregnenolone and progesterone to their 17-alpha-hydroxylated products and subsequently to dehydroepiandrosterone (DHEA) and androstenedione. Catalyzes both the 17-alpha-hydroxylation and the 17,20-lyase reaction. This Ictalurus punctatus (Channel catfish) protein is Steroid 17-alpha-hydroxylase/17,20 lyase (cyp17a1).